The chain runs to 603 residues: Serine palmitoyltransferase 2 (603 aa).

Residues 90 to 107 traverse the membrane as a helical segment; the sequence is YYYVVATYLTYLVLIIIG. Residue K398 is modified to N6-(pyridoxal phosphate)lysine.

Belongs to the class-II pyridoxal-phosphate-dependent aminotransferase family. Lcb1 and lcb2 encode essential subunits of the enzyme and form a heterodimer. Requires pyridoxal 5'-phosphate as cofactor.

The protein resides in the cytoplasm. It is found in the endoplasmic reticulum. The protein localises to the membrane. The catalysed reaction is L-serine + hexadecanoyl-CoA + H(+) = 3-oxosphinganine + CO2 + CoA. It functions in the pathway lipid metabolism; sphingolipid metabolism. In terms of biological role, catalytic subunit of serine palmitoyltransferase (SPT), which catalyzes the committed step in the synthesis of sphingolipids, the condensation of serine with palmitoyl CoA to form the long chain base 3-ketosphinganine. The chain is Serine palmitoyltransferase 2 (lcb2) from Schizosaccharomyces pombe (strain 972 / ATCC 24843) (Fission yeast).